A 306-amino-acid polypeptide reads, in one-letter code: Ribonuclease HIII (306 aa).

Positions W87–K302 constitute an RNase H type-2 domain. Residues D93, E94, and D196 each coordinate a divalent metal cation.

This sequence belongs to the RNase HII family. RnhC subfamily. Requires Mn(2+) as cofactor. The cofactor is Mg(2+).

It localises to the cytoplasm. It carries out the reaction Endonucleolytic cleavage to 5'-phosphomonoester.. Endonuclease that specifically degrades the RNA of RNA-DNA hybrids. The chain is Ribonuclease HIII from Exiguobacterium sibiricum (strain DSM 17290 / CCUG 55495 / CIP 109462 / JCM 13490 / 255-15).